We begin with the raw amino-acid sequence, 337 residues long: Fructose-1,6-bisphosphatase class 1 (337 aa).

Mg(2+) is bound by residues Glu-94, Asp-116, Leu-118, and Asp-119. Substrate is bound by residues 119–122, Asn-210, and Lys-276; that span reads DGSS. Glu-282 is a Mg(2+) binding site.

Belongs to the FBPase class 1 family. As to quaternary structure, homotetramer. The cofactor is Mg(2+).

It is found in the cytoplasm. The catalysed reaction is beta-D-fructose 1,6-bisphosphate + H2O = beta-D-fructose 6-phosphate + phosphate. It participates in carbohydrate biosynthesis; gluconeogenesis. This Burkholderia multivorans (strain ATCC 17616 / 249) protein is Fructose-1,6-bisphosphatase class 1.